The chain runs to 366 residues: UDP-N-acetylglucosamine--N-acetylmuramyl-(pentapeptide) pyrophosphoryl-undecaprenol N-acetylglucosamine transferase (366 aa).

UDP-N-acetyl-alpha-D-glucosamine contacts are provided by residues 14–16, N125, R168, S196, and Q297; that span reads TGG.

This sequence belongs to the glycosyltransferase 28 family. MurG subfamily.

The protein localises to the cell inner membrane. The catalysed reaction is di-trans,octa-cis-undecaprenyl diphospho-N-acetyl-alpha-D-muramoyl-L-alanyl-D-glutamyl-meso-2,6-diaminopimeloyl-D-alanyl-D-alanine + UDP-N-acetyl-alpha-D-glucosamine = di-trans,octa-cis-undecaprenyl diphospho-[N-acetyl-alpha-D-glucosaminyl-(1-&gt;4)]-N-acetyl-alpha-D-muramoyl-L-alanyl-D-glutamyl-meso-2,6-diaminopimeloyl-D-alanyl-D-alanine + UDP + H(+). It participates in cell wall biogenesis; peptidoglycan biosynthesis. Its function is as follows. Cell wall formation. Catalyzes the transfer of a GlcNAc subunit on undecaprenyl-pyrophosphoryl-MurNAc-pentapeptide (lipid intermediate I) to form undecaprenyl-pyrophosphoryl-MurNAc-(pentapeptide)GlcNAc (lipid intermediate II). The chain is UDP-N-acetylglucosamine--N-acetylmuramyl-(pentapeptide) pyrophosphoryl-undecaprenol N-acetylglucosamine transferase from Rhodopseudomonas palustris (strain HaA2).